Here is a 481-residue protein sequence, read N- to C-terminus: Glutamyl-tRNA(Gln) amidotransferase subunit A (481 aa).

Residues Lys-78 and Ser-153 each act as charge relay system in the active site. Residue Ser-177 is the Acyl-ester intermediate of the active site.

It belongs to the amidase family. GatA subfamily. Heterotrimer of A, B and C subunits.

It catalyses the reaction L-glutamyl-tRNA(Gln) + L-glutamine + ATP + H2O = L-glutaminyl-tRNA(Gln) + L-glutamate + ADP + phosphate + H(+). Allows the formation of correctly charged Gln-tRNA(Gln) through the transamidation of misacylated Glu-tRNA(Gln) in organisms which lack glutaminyl-tRNA synthetase. The reaction takes place in the presence of glutamine and ATP through an activated gamma-phospho-Glu-tRNA(Gln). This Borreliella afzelii (strain PKo) (Borrelia afzelii) protein is Glutamyl-tRNA(Gln) amidotransferase subunit A.